A 560-amino-acid chain; its full sequence is Glycolate permease GlcA (560 aa).

At 1-13 the chain is on the cytoplasmic side; it reads MVTWTQMYMPMGG. A helical membrane pass occupies residues 14–34; it reads LGLSALVALIPIIFFFVALAV. The Periplasmic portion of the chain corresponds to 35–41; sequence LRLKGHV. The helical transmembrane segment at 42-62 threads the bilayer; it reads AGAITLILSILIAIFAFKMPI. Residues 63-69 are Cytoplasmic-facing; the sequence is DMAFAAA. The helical transmembrane segment at 70 to 90 threads the bilayer; it reads GYGFIYGLWPIAWIIVAAVFL. Over 91–130 the chain is Periplasmic; sequence YKLTVASGQFDIIRSSVISITDDQRLQVLLIGFSFGALLE. A helical membrane pass occupies residues 131 to 151; the sequence is GAAGFGAPVAITGALLVGLGF. Residues 152 to 158 lie on the Cytoplasmic side of the membrane; the sequence is KPLYAAG. The helical transmembrane segment at 159 to 179 threads the bilayer; that stretch reads LCLIANTAPVAFGALGVPILV. Residues 180-199 lie on the Periplasmic side of the membrane; that stretch reads AGQVTGIDPFHIGAMAGRQL. Residues 200 to 220 form a helical membrane-spanning segment; that stretch reads PFLSVLVPFWLVAMMDGWKGV. Over 221–225 the chain is Cytoplasmic; sequence KETWP. Residues 226-246 traverse the membrane as a helical segment; that stretch reads AALVAGGSFAVTQFFTSNYIG. The Periplasmic segment spans residues 247 to 248; that stretch reads PE. The chain crosses the membrane as a helical span at residues 249–269; that stretch reads LPDITSALVSIVSLALFLKVW. Residues 270-313 lie on the Cytoplasmic side of the membrane; sequence RPKNTETAISMGQSAGAMVVNKPSSGGPVPSEYSLGQIIRAWSP. The helical transmembrane segment at 314-334 threads the bilayer; sequence FLILTVLVTIWTMKPFKALFA. The Periplasmic portion of the chain corresponds to 335–378; the sequence is PGGAFYSLVINFQIPHLHQQVLKAAPIVAQPTPMDAVFKFDPLS. A helical membrane pass occupies residues 379–399; it reads AGGTAIFIAAIISIFILGVGI. The Cytoplasmic portion of the chain corresponds to 400 to 408; the sequence is KKGIGVFAE. A helical transmembrane segment spans residues 409–429; the sequence is TLISLKWPILSIGMVLAFAFV. Topologically, residues 430-438 are periplasmic; it reads TNYSGMSTT. A helical transmembrane segment spans residues 439–459; sequence LALVLAGTGVMFPFFSPFLGW. At 460 to 536 the chain is on the cytoplasmic side; it reads LGVFLTGSDT…ELFRYTVKHS (77 aa). A helical transmembrane segment spans residues 537 to 557; sequence LIFASVIGIITLLQAYVFTGM. The Periplasmic portion of the chain corresponds to 558 to 560; sequence LVS.

Belongs to the lactate permease family.

The protein resides in the cell inner membrane. The catalysed reaction is glycolate(in) + H(+)(in) = glycolate(out) + H(+)(out). It carries out the reaction (S)-lactate(in) + H(+)(in) = (S)-lactate(out) + H(+)(out). It catalyses the reaction (R)-lactate(in) + H(+)(in) = (R)-lactate(out) + H(+)(out). With respect to regulation, inhibited by the proton ionophore carbonyl cyanide m-chlorophenylhydrazone (CCCP). In terms of biological role, uptake of glycolate across the membrane. Can also transport L-lactate and D-lactate. Seems to be driven by a proton motive force. In Escherichia coli (strain K12), this protein is Glycolate permease GlcA.